Here is a 498-residue protein sequence, read N- to C-terminus: MRINPTTSGSGVSTLEKKNPGRVVQIIGPVLDVAFPPGKMPNIYNALVVQGRDSVGQPINVACEVQQLLGNNRVRAVAMSATDGLTRGMAVIDTGAPIRVPVGGATLGRIFNVLGEPVDNLGPVDTSTTSPIHRSAPAFIQLDTKLSIFETGIKVVDLLAPYRRGGKIGLFGGAGVGKTVLIMELINNIAKAHGGVSVFGGVGERTREGNDLYMEMKESGVINKENIAESKVALVYGQMNEPPGARMRVGLTALTMAEYFRDVNEQDVLLFIDNIFRFVQAGSEVSALLGRMPSAVGYQPTLSTEMGSLQERITSTKDGSITSIQAVYVPADDLTDPAPATTFAHLDATTVLSRGLAAKGIYPAVDPLDSTSTMLQPRIVGEEHYETAQRVKQTLQRYKELQDIIAILGLDELSEEDRLLVARARKIERFLSQPFFVAEVFTGSPGKYVGLAETIRGFQLILSGELDGLPEQAFYLVGTIDEATAKAMNLEMESNLKK.

ATP is bound at residue 172–179; the sequence is GGAGVGKT.

Belongs to the ATPase alpha/beta chains family. As to quaternary structure, F-type ATPases have 2 components, CF(1) - the catalytic core - and CF(0) - the membrane proton channel. CF(1) has five subunits: alpha(3), beta(3), gamma(1), delta(1), epsilon(1). CF(0) has four main subunits: a(1), b(1), b'(1) and c(9-12).

The protein localises to the plastid. It is found in the chloroplast thylakoid membrane. The catalysed reaction is ATP + H2O + 4 H(+)(in) = ADP + phosphate + 5 H(+)(out). Its function is as follows. Produces ATP from ADP in the presence of a proton gradient across the membrane. The catalytic sites are hosted primarily by the beta subunits. This is ATP synthase subunit beta, chloroplastic from Solanum tuberosum (Potato).